We begin with the raw amino-acid sequence, 347 residues long: Phosphoribosylformylglycinamidine cyclo-ligase (347 aa).

The protein belongs to the AIR synthase family.

Its subcellular location is the cytoplasm. It carries out the reaction 2-formamido-N(1)-(5-O-phospho-beta-D-ribosyl)acetamidine + ATP = 5-amino-1-(5-phospho-beta-D-ribosyl)imidazole + ADP + phosphate + H(+). It participates in purine metabolism; IMP biosynthesis via de novo pathway; 5-amino-1-(5-phospho-D-ribosyl)imidazole from N(2)-formyl-N(1)-(5-phospho-D-ribosyl)glycinamide: step 2/2. The polypeptide is Phosphoribosylformylglycinamidine cyclo-ligase (Yersinia enterocolitica serotype O:8 / biotype 1B (strain NCTC 13174 / 8081)).